The primary structure comprises 466 residues: Proline--tRNA ligase (466 aa).

The protein belongs to the class-II aminoacyl-tRNA synthetase family. ProS type 3 subfamily. Homodimer.

It is found in the cytoplasm. The catalysed reaction is tRNA(Pro) + L-proline + ATP = L-prolyl-tRNA(Pro) + AMP + diphosphate. In terms of biological role, catalyzes the attachment of proline to tRNA(Pro) in a two-step reaction: proline is first activated by ATP to form Pro-AMP and then transferred to the acceptor end of tRNA(Pro). The sequence is that of Proline--tRNA ligase from Picrophilus torridus (strain ATCC 700027 / DSM 9790 / JCM 10055 / NBRC 100828 / KAW 2/3).